The primary structure comprises 80 residues: Acyl carrier protein (80 aa).

Residues 2–77 (SDTLKRLQKI…DALNYIENKI (76 aa)) form the Carrier domain. An O-(pantetheine 4'-phosphoryl)serine modification is found at S37.

This sequence belongs to the acyl carrier protein (ACP) family. In terms of processing, 4'-phosphopantetheine is transferred from CoA to a specific serine of apo-ACP by AcpS. This modification is essential for activity because fatty acids are bound in thioester linkage to the sulfhydryl of the prosthetic group.

The protein localises to the plastid. It is found in the chloroplast. Its pathway is lipid metabolism; fatty acid biosynthesis. Functionally, carrier of the growing fatty acid chain in fatty acid biosynthesis. The polypeptide is Acyl carrier protein (Cylindrotheca sp. (strain N1) (Marine diatom)).